The primary structure comprises 61 residues: Potassium channel toxin alpha-KTx 6.6 (61 aa).

The first 23 residues, 1 to 23 (MNAKFILLLLVVATTMLLPDTQG), serve as a signal peptide directing secretion. 4 disulfide bridges follow: Cys-29-Cys-50, Cys-35-Cys-55, Cys-39-Cys-57, and Cys-45-Cys-60. Cysteine amide is present on Cys-60.

This sequence belongs to the short scorpion toxin superfamily. Potassium channel inhibitor family. Alpha-KTx 06 subfamily. As to expression, expressed by the venom gland.

Its subcellular location is the secreted. In terms of biological role, blocker of voltage-gated potassium channels. The chain is Potassium channel toxin alpha-KTx 6.6 from Opistophthalmus carinatus (African yellow leg scorpion).